Reading from the N-terminus, the 576-residue chain is K(+)/H(+) antiporter NhaP2 (576 aa).

13 helical membrane passes run 6-26 (INSF…LSPM), 34-54 (ILLI…GGIL), 58-78 (YSTA…DGGM), 87-107 (VALW…TSIT), 109-129 (MMAA…GAIV), 163-183 (PMAV…DTEM), 185-205 (FSFM…LGLG), 219-239 (LADG…YAAS), 242-262 (LGGS…NKPT), 271-291 (VLDG…GLLL), 299-319 (ILIP…PVAV), 335-355 (WFIS…VFPM), and 359-379 (LPGA…SLLV). The 82-residue stretch at 405 to 486 (SGVEIYPSSE…LEALSNLFSQ (82 aa)) folds into the RCK C-terminal domain.

The protein belongs to the monovalent cation:proton antiporter 1 (CPA1) transporter (TC 2.A.36) family. NhaP2 subfamily.

The protein resides in the cell inner membrane. The enzyme catalyses K(+)(in) + H(+)(out) = K(+)(out) + H(+)(in). K(+)/H(+) antiporter that extrudes potassium in exchange for external protons and maintains the internal concentration of potassium under toxic levels. The sequence is that of K(+)/H(+) antiporter NhaP2 from Shewanella baltica (strain OS155 / ATCC BAA-1091).